Consider the following 604-residue polypeptide: Testis-expressed protein 13C-1 (604 aa).

Disordered stretches follow at residues E314–D337, P374–I397, C485–K523, and A538–C580. Residues Q322–N333 are compositionally biased toward polar residues. Over residues K544 to L572 the composition is skewed to basic and acidic residues.

Belongs to the TEX13 family.

Its function is as follows. Plays a role in transcriptional repression. The sequence is that of Testis-expressed protein 13C-1 from Mus musculus (Mouse).